Here is a 94-residue protein sequence, read N- to C-terminus: Selenoprotein K (94 aa).

Residues 20 to 42 form a helical membrane-spanning segment; that stretch reads LSFITDFFWGIAEFVVFFFKTLL. The segment at 48–94 is disordered; that stretch reads KRRGYGGSSDSRYDDGRGPPGNPPRRMGRISHLRGPSPPPMAGGUGR. A non-standard amino acid (selenocysteine) is located at residue Sec92.

It belongs to the selenoprotein K family. Interacts with DERL1, DERL2, DERL3 and SELENOS. The SELENOK-SELENOS complex interacts with VCP. Interacts with ZDHHC6. In terms of processing, cleaved by CAPN2/m-calpain in resting macrophages but not in activated macrophages. Macrophage activation up-regulates expression of the calpain inhibitor CAST/calpastatin, resulting in inhibition of CAPN2 activity. Post-translationally, truncated SELENOK proteins produced by failed UGA/Sec decoding are ubiquitinated by the CRL2(KLHDC2) complex, which recognizes the diglycine (Gly-Gly) at the C-terminus of truncated SELENOK proteins.

It is found in the endoplasmic reticulum membrane. It localises to the cell membrane. Required for Ca(2+) flux in immune cells and plays a role in T-cell proliferation and in T-cell and neutrophil migration. Involved in endoplasmic reticulum-associated degradation (ERAD) of soluble glycosylated proteins. Required for palmitoylation and cell surface expression of CD36 and involved in macrophage uptake of low-density lipoprotein and in foam cell formation. Together with ZDHHC6, required for palmitoylation of ITPR1 in immune cells, leading to regulate ITPR1 stability and function. Plays a role in protection of cells from ER stress-induced apoptosis. Protects cells from oxidative stress when overexpressed in cardiomyocytes. This chain is Selenoprotein K, found in Rattus norvegicus (Rat).